The sequence spans 88 residues: Small ribosomal subunit protein uS17 (88 aa).

It belongs to the universal ribosomal protein uS17 family. As to quaternary structure, part of the 30S ribosomal subunit.

One of the primary rRNA binding proteins, it binds specifically to the 5'-end of 16S ribosomal RNA. In Vesicomyosocius okutanii subsp. Calyptogena okutanii (strain HA), this protein is Small ribosomal subunit protein uS17.